Here is a 380-residue protein sequence, read N- to C-terminus: Large ribosomal subunit protein mL38 (380 aa).

The transit peptide at 1-26 directs the protein to the mitochondrion; the sequence is MAAPWWRAALCECRRWRGFSTSAVLG. Residues 99 to 127 are a coiled coil; that stretch reads RTQQLLERKQAIQELRANVEEERAARLRT.

This sequence belongs to the phosphatidylethanolamine-binding protein family. Mitochondrion-specific ribosomal protein mL38 subfamily. Component of the mitochondrial large ribosomal subunit (mt-LSU). Mature mammalian 55S mitochondrial ribosomes consist of a small (28S) and a large (39S) subunit. The 28S small subunit contains a 12S ribosomal RNA (12S mt-rRNA) and 30 different proteins. The 39S large subunit contains a 16S rRNA (16S mt-rRNA), a copy of mitochondrial valine transfer RNA (mt-tRNA(Val)), which plays an integral structural role, and 52 different proteins. mL38 is located at the central protuberance.

Its subcellular location is the mitochondrion. The polypeptide is Large ribosomal subunit protein mL38 (MRPL38) (Homo sapiens (Human)).